Consider the following 216-residue polypeptide: MLGIGAFKQRMPRPGEALPGREQALPLHNTHLVNGHPLRGEFIGLAQVQFGLGCFWGAERKFWNVPGVYTTAVGYAGGQTPNATYSEVCSGQTGHTEAVLVVFDEQAVSFAQLLRTFWESHDPTQGMQQGNDVGTQYRSAIYCTTQAQYDAALASRDAYQQQLTAAGYGAITTEIRFPAPTFYYAEDDHQQYLAKHPNGYCGLGGTGVSCPIGLDA.

Cysteine 54 is a catalytic residue.

It belongs to the MsrA Met sulfoxide reductase family.

The enzyme catalyses L-methionyl-[protein] + [thioredoxin]-disulfide + H2O = L-methionyl-(S)-S-oxide-[protein] + [thioredoxin]-dithiol. The catalysed reaction is [thioredoxin]-disulfide + L-methionine + H2O = L-methionine (S)-S-oxide + [thioredoxin]-dithiol. Its function is as follows. Has an important function as a repair enzyme for proteins that have been inactivated by oxidation. Catalyzes the reversible oxidation-reduction of methionine sulfoxide in proteins to methionine. The sequence is that of Peptide methionine sulfoxide reductase MsrA from Xanthomonas euvesicatoria pv. vesicatoria (strain 85-10) (Xanthomonas campestris pv. vesicatoria).